A 153-amino-acid polypeptide reads, in one-letter code: Large ribosomal subunit protein uL13 (153 aa).

Belongs to the universal ribosomal protein uL13 family. In terms of assembly, part of the 50S ribosomal subunit.

In terms of biological role, this protein is one of the early assembly proteins of the 50S ribosomal subunit, although it is not seen to bind rRNA by itself. It is important during the early stages of 50S assembly. In Xanthobacter autotrophicus (strain ATCC BAA-1158 / Py2), this protein is Large ribosomal subunit protein uL13.